A 539-amino-acid chain; its full sequence is Membrane protein insertase YidC (539 aa).

Helical transmembrane passes span 6–26, 341–361, 416–436, 454–474, and 495–515; these read TLLV…WQVA, SVIQ…TFIV, LGGC…YWAL, LSAQ…MFLI, and PVMF…YWLV.

Belongs to the OXA1/ALB3/YidC family. Type 1 subfamily. In terms of assembly, interacts with the Sec translocase complex via SecD. Specifically interacts with transmembrane segments of nascent integral membrane proteins during membrane integration.

The protein resides in the cell inner membrane. Functionally, required for the insertion and/or proper folding and/or complex formation of integral membrane proteins into the membrane. Involved in integration of membrane proteins that insert both dependently and independently of the Sec translocase complex, as well as at least some lipoproteins. Aids folding of multispanning membrane proteins. This is Membrane protein insertase YidC from Vibrio vulnificus (strain YJ016).